Here is a 257-residue protein sequence, read N- to C-terminus: PHD finger protein Alfin1 (257 aa).

The interval 145–200 is disordered; the sequence is SKDQLTAHNNGSNSKYKSSGKSRQSESQTKGVKMSAPVKEEVDSGEEEEEDDDEQG. Residues 153–166 are compositionally biased toward low complexity; that stretch reads NNGSNSKYKSSGKS. Residues 187-199 show a composition bias toward acidic residues; sequence DSGEEEEEDDDEQ. The PHD-type zinc-finger motif lies at 200–252; sequence GATCGACGDNYGTDEFWICCDMCEKWFHGKCVKITPAKAEHIKQYKCPGCSIK.

This sequence belongs to the Alfin family. As to quaternary structure, interacts with H3K4me3 and to a lesser extent with H3K4me2. As to expression, predominantly expressed in the roots.

Its subcellular location is the nucleus. Histone-binding component that specifically recognizes H3 tails trimethylated on 'Lys-4' (H3K4me3), which mark transcription start sites of virtually all active genes. Transcriptional regulator that binds specifically to DNA sequences 5'-GNGGTG-3' or 5'-GTGGNG-3', including promoter elements of the salt-inducible PRP2 gene. Plays a role in salinity tolerance. The protein is PHD finger protein Alfin1 (ALFIN-1) of Medicago sativa (Alfalfa).